Reading from the N-terminus, the 433-residue chain is Glutamate-1-semialdehyde 2,1-aminomutase (433 aa).

The residue at position 272 (Lys-272) is an N6-(pyridoxal phosphate)lysine.

The protein belongs to the class-III pyridoxal-phosphate-dependent aminotransferase family. HemL subfamily. Homodimer. It depends on pyridoxal 5'-phosphate as a cofactor.

It is found in the cytoplasm. It catalyses the reaction (S)-4-amino-5-oxopentanoate = 5-aminolevulinate. The protein operates within porphyrin-containing compound metabolism; protoporphyrin-IX biosynthesis; 5-aminolevulinate from L-glutamyl-tRNA(Glu): step 2/2. The polypeptide is Glutamate-1-semialdehyde 2,1-aminomutase (Magnetococcus marinus (strain ATCC BAA-1437 / JCM 17883 / MC-1)).